The following is a 358-amino-acid chain: MSVQNVVLFDTQPLTLMLGGKLSHINVAYQTYGTLNAEKNNAVLICHALTGDAEPYFDDGRDGWWQNFMGAGLALDTDRYFFISSNVLGGCKGTTGPSSINPQTGKPYGSQFPNIVVQDIVKVQKALLEHLGISHLKAIIGGSFGGMQANQWAIDYPDFMDNIVNLCSSIYFSAEAIGFNHVMRQAVINDPNFNGGDYYEGTPPDQGLSIARMLGMLTYRTDLQLAKAFGRATKSDGSFWGDYFQVESYLSYQGKKFLERFDANSYLHLLRALDMYDPSLGYENVKEALSRIKARYTLVSVTTDQLFKPIDLYKSKQLLEQSGVDLHFYEFPSDYGHDAFLVDYDQFEKRIRDGLAGN.

An AB hydrolase-1 domain is found at 41-343; the sequence is NAVLICHALT…DYGHDAFLVD (303 aa). The active-site Nucleophile is the S143. Residue R212 coordinates substrate. Residues D304 and H337 contribute to the active site. D338 is a binding site for substrate.

This sequence belongs to the AB hydrolase superfamily. MetX family. Homodimer.

It is found in the cytoplasm. It catalyses the reaction L-homoserine + acetyl-CoA = O-acetyl-L-homoserine + CoA. It functions in the pathway amino-acid biosynthesis; L-methionine biosynthesis via de novo pathway; O-acetyl-L-homoserine from L-homoserine: step 1/1. Transfers an acetyl group from acetyl-CoA to L-homoserine, forming acetyl-L-homoserine. In Haemophilus influenzae (strain 86-028NP), this protein is Homoserine O-acetyltransferase.